The sequence spans 266 residues: Apolipoprotein A-I (266 aa).

A signal peptide spans 1–18; that stretch reads MKAVVLTLAVLFLTGSQA. 2 consecutive repeat copies span residues 67-88 and 89-110. The segment at 67 to 266 is 10 X approximate tandem repeats; sequence LKLLDNWDSL…DEATKKLNSQ (200 aa). Met109 carries the post-translational modification Methionine sulfoxide. The stretch at 111-121 is one 3; half-length repeat; sequence KDLEEVKKKVQ. Repeat copies occupy residues 122-143, 144-165, 166-187, 188-209, and 210-231. The 9; half-length repeat unit spans residues 232–242; sequence PALEDLRQGLL. Repeat 10 spans residues 243 to 266; the sequence is PVLENFRDSLLAAVDEATKKLNSQ.

The protein belongs to the apolipoprotein A1/A4/E family. In terms of assembly, homodimer. Interacts with APOA1BP and CLU. Component of a sperm activating protein complex (SPAP), consisting of APOA1, an immunoglobulin heavy chain, an immunoglobulin light chain and albumin. Interacts with NDRG1. Interacts with SCGB3A2. Interacts with NAXE and YJEFN3. In terms of processing, glycosylated. Palmitoylated. Post-translationally, phosphorylation sites are present in the extracellular medium.

The protein localises to the secreted. Participates in the reverse transport of cholesterol from tissues to the liver for excretion by promoting cholesterol efflux from tissues and by acting as a cofactor for the lecithin cholesterol acyltransferase (LCAT). As part of the SPAP complex, activates spermatozoa motility. This is Apolipoprotein A-I (APOA1) from Neomonachus schauinslandi (Hawaiian monk seal).